A 208-amino-acid chain; its full sequence is Cysteine-rich protein 2 (208 aa).

One can recognise an LIM zinc-binding 1 domain in the interval 5 to 57 (CPKCDKTVYFAEKVSSLGKDWHRFCLRCEHCSKTLTPGGHAEHDGKPFCHKPC). Lys-23 carries the N6-acetyllysine modification. A disordered region spans residues 98–117 (TEERKASGPPKGPSKASSVT). Position 104 is a phosphoserine (Ser-104). The segment covering 104-115 (SGPPKGPSKASS) has biased composition (low complexity). Residues 126-178 (CPRCNKRVYFAEKVTSLGKDWHRPCLRCERCGKTLTPGGHAEHDGQPYCHKPC) form the LIM zinc-binding 2 domain. N6-acetyllysine is present on residues Lys-138 and Lys-144.

As to quaternary structure, interacts with TGFB1I1.

The polypeptide is Cysteine-rich protein 2 (CRIP2) (Bos taurus (Bovine)).